A 691-amino-acid polypeptide reads, in one-letter code: Elongation factor G (691 aa).

Residues 8 to 283 (EKQRNIGIMA…AVVQYLPSPL (276 aa)) enclose the tr-type G domain. Residues 17–24 (AHIDAGKT), 81–85 (DTPGH), and 135–138 (NKMD) each bind GTP.

Belongs to the TRAFAC class translation factor GTPase superfamily. Classic translation factor GTPase family. EF-G/EF-2 subfamily.

It localises to the cytoplasm. Catalyzes the GTP-dependent ribosomal translocation step during translation elongation. During this step, the ribosome changes from the pre-translocational (PRE) to the post-translocational (POST) state as the newly formed A-site-bound peptidyl-tRNA and P-site-bound deacylated tRNA move to the P and E sites, respectively. Catalyzes the coordinated movement of the two tRNA molecules, the mRNA and conformational changes in the ribosome. The chain is Elongation factor G from Lawsonia intracellularis (strain PHE/MN1-00).